Reading from the N-terminus, the 90-residue chain is Sec-independent protein translocase protein TatA (90 aa).

A helical transmembrane segment spans residues 1–21 (MGGASIWHWIVVGVIVMLLFG). The tract at residues 42–90 (GMADEDQPQAPVANQSPPPVSATEPVRTLPPHQGEPAPAANASVDRKVG) is disordered.

Belongs to the TatA/E family. The Tat system comprises two distinct complexes: a TatABC complex, containing multiple copies of TatA, TatB and TatC subunits, and a separate TatA complex, containing only TatA subunits. Substrates initially bind to the TatABC complex, which probably triggers association of the separate TatA complex to form the active translocon.

It localises to the cell inner membrane. In terms of biological role, part of the twin-arginine translocation (Tat) system that transports large folded proteins containing a characteristic twin-arginine motif in their signal peptide across membranes. TatA could form the protein-conducting channel of the Tat system. The polypeptide is Sec-independent protein translocase protein TatA (Methylobacterium nodulans (strain LMG 21967 / CNCM I-2342 / ORS 2060)).